Here is a 604-residue protein sequence, read N- to C-terminus: MPDSSFDGKAFVLTLPSQPGVYRMLNAAGDVIYVGKAIDLRKRVSSYFQKSNLSPRIQLMVSQITGIETTVTRSEAEALLLENNLIKSLAPRYNILFRDDKSYPYLLLTNHAFPRLAFYRGALDNRHQYFGPFPNAGVVKSSIQLLQKVFRLRTCENSVFNNRTRPCLLHQIKRCSAPCVNLITPEAYREDVNSAALFLQGKQDEVLKTIEQKMFEASDRQAYEQAVLFRDQMQALRMIQEKQFVDSSRALDADVIACTTGTDKHTVAVNLVMIRSGRHLGDKTFFPQNTHEDSISTVLEAFVSQHYLNRSVPPLIILGKKIRVTLLQKLLSEQAGHKVTLTINPIGERRKWLDMATENAQLALRQKQIQQASQEDRLQALQEVLNLPGLARIECFDISHTMGEATMASCVVYDHYAMRNGEYRRYNITGITPGDDYAAMRDVLQRRYAKIAMEEGKLPDLILIDGGKGQIGVASEVMIELGLNDIPLVGVAKGEARKPGLEQLILPWQEETLHLPNDHPALHLIQQIRDEAHRFAIQGHRAKRAKTRKTSSLEQIAGIGSKRRQNLLTRFGGLKGVKNASIEELQQTEGVSRALAEKIYRELR.

In terms of domain architecture, GIY-YIG spans 17–95 (SQPGVYRMLN…IKSLAPRYNI (79 aa)). In terms of domain architecture, UVR spans 204–239 (DEVLKTIEQKMFEASDRQAYEQAVLFRDQMQALRMI).

Belongs to the UvrC family. In terms of assembly, interacts with UvrB in an incision complex.

The protein localises to the cytoplasm. In terms of biological role, the UvrABC repair system catalyzes the recognition and processing of DNA lesions. UvrC both incises the 5' and 3' sides of the lesion. The N-terminal half is responsible for the 3' incision and the C-terminal half is responsible for the 5' incision. The protein is UvrABC system protein C of Nitrosomonas eutropha (strain DSM 101675 / C91 / Nm57).